We begin with the raw amino-acid sequence, 421 residues long: tRNA (guanine-N(7)-)-methyltransferase non-catalytic subunit TRM82 (421 aa).

WD repeat units follow at residues 72-112, 170-212, and 216-258; these read AVYS…EDPE, GHVS…IVDK, and GHKE…SQYS.

This sequence belongs to the WD repeat TRM82 family. As to quaternary structure, forms a heterodimer with the catalytic subunit TRM8.

Its subcellular location is the nucleus. It participates in tRNA modification; N(7)-methylguanine-tRNA biosynthesis. Its function is as follows. Required for the formation of N(7)-methylguanine at position 46 (m7G46) in tRNA. In the complex, it is required to stabilize and induce conformational changes of the catalytic subunit. In Candida glabrata (strain ATCC 2001 / BCRC 20586 / JCM 3761 / NBRC 0622 / NRRL Y-65 / CBS 138) (Yeast), this protein is tRNA (guanine-N(7)-)-methyltransferase non-catalytic subunit TRM82.